We begin with the raw amino-acid sequence, 187 residues long: Putative lipoprotein LppJ (187 aa).

The signal sequence occupies residues 1 to 28; the sequence is MPHSTADRRLRLTRQALLAAAVVPLLAG. Cys-29 carries N-palmitoyl cysteine lipidation. A lipid anchor (S-diacylglycerol cysteine) is attached at Cys-29.

It localises to the cell membrane. The polypeptide is Putative lipoprotein LppJ (lppJ) (Mycobacterium tuberculosis (strain CDC 1551 / Oshkosh)).